Reading from the N-terminus, the 1476-residue chain is Cystic fibrosis transmembrane conductance regulator (1476 aa).

Over 1–77 (MQKSPLEKAS…QLIHALRRCF (77 aa)) the chain is Cytoplasmic. Residues 78–98 (VWRFVFYGVLLYLGEVTKAVQ) traverse the membrane as a helical segment. Positions 81–365 (FVFYGVLLYL…TAVQIWYDSL (285 aa)) constitute an ABC transmembrane type-1 1 domain. Over 99–122 (PVLLGRIIASYDPDNTEERSIAIY) the chain is Extracellular. The chain crosses the membrane as a helical span at residues 123 to 146 (LGIGLCLLFIVRTLLLHPAIFGLH). At 147–195 (HIGMQMRIAMFSLIYKKTLKLSSRVLDKISIGQLISLLSNNLNKFDEGL) the chain is on the cytoplasmic side. A helical membrane pass occupies residues 196-216 (ALAHFIWIAPLQVVLLMGLLW). Residues 217-222 (DLLQFS) lie on the Extracellular side of the membrane. A helical membrane pass occupies residues 223–243 (AFCGLGLLIVLVIFQAILGKM). Residues 244-298 (MVKYRDKRAAKINERLVITSEVIDNIYSVKAYCWESAMEKIIESLREEELKMTRR) lie on the Cytoplasmic side of the membrane. The helical transmembrane segment at 299-319 (SAYMRFFTSSAFFFSGFFVVF) threads the bilayer. Residues 320-339 (LSVLPYTVINGIVLRKIFTT) lie on the Extracellular side of the membrane. Residues 340–358 (ISFCIVLRMSVTRQFPTAV) form a helical membrane-spanning segment. Over 359–853 (QIWYDSLGMI…YLRYFTLHRG (495 aa)) the chain is Cytoplasmic. ATP is bound by residues W401, 458–465 (GSTGAGKT), and Q493. One can recognise an ABC transporter 1 domain in the interval 412-646 (VQLNNDDRKT…RPDFSSKLMG (235 aa)). The S-palmitoyl cysteine moiety is linked to residue C524. S549 and S660 each carry phosphoserine. A disordered R region region spans residues 654 to 826 (TEERRSSILT…EEINEEDLKE (173 aa)). Residue S670 is modified to Phosphoserine; by PKA. A phosphoserine mark is found at S684, S698, and S710. T715 carries the post-translational modification Phosphothreonine. A phosphoserine mark is found at S732, S763, S785, S790, and S808. A helical membrane pass occupies residues 854–874 (LFAVLIWCVLVFLVEVAASLF). Residues 854–1153 (LFAVLIWCVL…SSIDTDSLMR (300 aa)) enclose the ABC transmembrane type-1 2 domain. The Extracellular portion of the chain corresponds to 875–913 (VLWLLKNNPVNGGNNGTKIANTSYVVVITSSSFYYIFYI). N-linked (GlcNAc...) asparagine glycosylation is found at N889 and N895. Residues 914–934 (YVGVADTLLALSLFRGLPLVH) traverse the membrane as a discontinuously helical segment. The Cytoplasmic portion of the chain corresponds to 935 to 985 (TLITASKILHRKMLHSILHAPMSTFNKLKAGGILNRFSKDIAILDDFLPLT). The chain crosses the membrane as a helical span at residues 986-1006 (IFDFIQLLFIVVGAIIVVSAL). Residues 1007–1008 (QP) lie on the Extracellular side of the membrane. The chain crosses the membrane as a helical span at residues 1009 to 1029 (YIFLATVPGLAVFILLRAYFL). Residues 1030-1090 (HTSQQLKQLE…TANWFMYLAT (61 aa)) lie on the Cytoplasmic side of the membrane. Residues 1091–1111 (LRWFQMRIDMIFVLFFIVVTF) traverse the membrane as a helical segment. Residues 1112-1125 (ISILTTGEGEGTTG) lie on the Extracellular side of the membrane. The chain crosses the membrane as a helical span at residues 1126-1146 (IILTLAMNIMSTLQWAVNSSI). The Cytoplasmic portion of the chain corresponds to 1147 to 1476 (DTDSLMRSVS…TEEEVQETRL (330 aa)). An ABC transporter 2 domain is found at 1208 to 1439 (VKDLTVKYVD…KSVFQRALSS (232 aa)). Residues Y1215 and 1240–1247 (GRTGSGKS) contribute to the ATP site. Residues 1382–1476 (RVLRQAFAGC…TEEEVQETRL (95 aa)) form an interaction with GORASP2 region. The S-palmitoyl cysteine moiety is linked to residue C1391. Phosphoserine is present on residues S1440 and S1452. The span at 1445-1456 (LFHGRHSSKQKP) shows a compositional bias: basic residues. The interval 1445 to 1476 (LFHGRHSSKQKPRTQITAVKEETEEEVQETRL) is disordered. Over residues 1466 to 1476 (ETEEEVQETRL) the composition is skewed to acidic residues. A PDZ-binding motif is present at residues 1474–1476 (TRL).

The protein belongs to the ABC transporter superfamily. ABCC family. CFTR transporter (TC 3.A.1.202) subfamily. As to quaternary structure, monomer; does not require oligomerization for channel activity. May form oligomers in the membrane. Interacts with SLC4A7 through NHERF1. Interacts with SHANK2. Interacts with NHERF1 and MYO6. Interacts (via C-terminus) with GOPC (via PDZ domain); this promotes CFTR internalization and thereby decreases channel activity. Interacts with SLC4A7 through NHERF1. Found in a complex with MYO5B and RAB11A. Interacts with ANO1. Interacts with SLC26A8. Interacts with AHCYL1; the interaction increases CFTR activity. Interacts with CSE1L. The core-glycosylated form interacts with GORASP2 (via PDZ GRASP-type 1 domain) in respone to ER stress. Interacts with MARCHF2; the interaction leads to CFTR ubiqtuitination and degradation. Interacts with ADGRG2. In terms of processing, N-glycosylated. Post-translationally, phosphorylated; cAMP treatment promotes phosphorylation and activates the channel. Dephosphorylation decreases the ATPase activity (in vitro). Phosphorylation at PKA sites activates the channel. Phosphorylation at PKC sites enhances the response to phosphorylation by PKA. Phosphorylated by AMPK; this inhibits channel activity. Ubiquitinated, leading to its degradation in the lysosome. Deubiquitination by USP10 in early endosomes enhances its endocytic recycling to the cell membrane. Ubiquitinated by RNF185 during ER stress. Ubiquitinated by MARCHF2. Detected in epithelial cells in nasopharynx, submandibular gland, pancreas and ileum (at protein level). Expressed in the epididymis. In the caput section of the epididymis, expressed uniformly on both the luminal and basolateral sides of the ducts and on sperm in the caput lumen (at protein level). In the cauda, detected along the luminal border but not continuously and is also expressed on the basolateral surface. Within the caudal lumen, detected on sperm.

It localises to the apical cell membrane. The protein localises to the early endosome membrane. Its subcellular location is the cell membrane. The protein resides in the recycling endosome membrane. It is found in the endoplasmic reticulum membrane. It localises to the nucleus. The enzyme catalyses ATP + H2O + closed Cl(-) channel = ADP + phosphate + open Cl(-) channel.. The catalysed reaction is chloride(in) = chloride(out). It carries out the reaction hydrogencarbonate(in) = hydrogencarbonate(out). It catalyses the reaction ATP + H2O = ADP + phosphate + H(+). Its function is as follows. Epithelial ion channel that plays an important role in the regulation of epithelial ion and water transport and fluid homeostasis. Mediates the transport of chloride ions across the cell membrane. Possesses an intrinsic ATPase activity and utilizes ATP to gate its channel; the passive flow of anions through the channel is gated by cycles of ATP binding and hydrolysis by the ATP-binding domains. The ion channel is also permeable to HCO(3)(-); selectivity depends on the extracellular chloride concentration. Exerts its function also by modulating the activity of other ion channels and transporters. Contributes to the regulation of the pH and the ion content of the epithelial fluid layer. Modulates the activity of the epithelial sodium channel (ENaC) complex, in part by regulating the cell surface expression of the ENaC complex. May regulate bicarbonate secretion and salvage in epithelial cells by regulating the transporter SLC4A7. Can inhibit the chloride channel activity of ANO1. Plays a role in the chloride and bicarbonate homeostasis during sperm epididymal maturation and capacitation. This Rattus norvegicus (Rat) protein is Cystic fibrosis transmembrane conductance regulator.